Consider the following 370-residue polypeptide: DNA replication and repair protein RecF (370 aa).

Residue 30–37 (GENAQGKT) participates in ATP binding.

The protein belongs to the RecF family.

The protein resides in the cytoplasm. Functionally, the RecF protein is involved in DNA metabolism; it is required for DNA replication and normal SOS inducibility. RecF binds preferentially to single-stranded, linear DNA. It also seems to bind ATP. The chain is DNA replication and repair protein RecF from Listeria monocytogenes serotype 4b (strain CLIP80459).